The following is a 430-amino-acid chain: MVTTLRQTDPDFEQKFAAFLSGKREVSEDVDRAVREIVDRVRREGDSALLDYSRRFDRIDLEKTGIAVTEAEIDAAFDAAPASTVEALKLARDRIEKHHARQLPKDDRYTDALGVELGSRWTAIKAVGLYVPGGTASYPSSVLMNAMPAKVAGVDRIVMVVPAPDGNLNPLVLVAARLAGVSEIYRVGGAQAIAALAYGTETIRPVAKIVGPGNAYVAAAKRIVFGTVGIDMIAGPSEVLIVADKDNNPDWIAADLLAQAEHDTAAQSILMTNDEAFAHAVEEAVERQLHTLARTETASASWRDFGAVILVKDFEDAIPLANRIAAEHLEIAVADAEAFVPRIRNAGSIFIGGYTPEVIGDYVGGCNHVLPTARSARFSSGLSVLDYMKRTSLLKLGSEQLRALGPAAIEIARAEGLDAHAQSVAIRLNL.

Positions 130, 191, and 214 each coordinate NAD(+). Positions 237, 259, and 262 each coordinate substrate. Residues Q259 and H262 each coordinate Zn(2+). Residues E327 and H328 each act as proton acceptor in the active site. Substrate-binding residues include H328, D361, E415, and H420. Residue D361 participates in Zn(2+) binding. H420 contributes to the Zn(2+) binding site.

This sequence belongs to the histidinol dehydrogenase family. Zn(2+) is required as a cofactor.

The catalysed reaction is L-histidinol + 2 NAD(+) + H2O = L-histidine + 2 NADH + 3 H(+). It functions in the pathway amino-acid biosynthesis; L-histidine biosynthesis; L-histidine from 5-phospho-alpha-D-ribose 1-diphosphate: step 9/9. Catalyzes the sequential NAD-dependent oxidations of L-histidinol to L-histidinaldehyde and then to L-histidine. The protein is Histidinol dehydrogenase of Brucella melitensis biotype 1 (strain ATCC 23456 / CCUG 17765 / NCTC 10094 / 16M).